Here is a 254-residue protein sequence, read N- to C-terminus: Probable transcriptional regulatory protein MAE_13580 (254 aa).

It belongs to the TACO1 family.

It localises to the cytoplasm. This chain is Probable transcriptional regulatory protein MAE_13580, found in Microcystis aeruginosa (strain NIES-843 / IAM M-2473).